The following is a 198-amino-acid chain: Large ribosomal subunit protein bL25 (198 aa).

It belongs to the bacterial ribosomal protein bL25 family. CTC subfamily. As to quaternary structure, part of the 50S ribosomal subunit; part of the 5S rRNA/L5/L18/L25 subcomplex. Contacts the 5S rRNA. Binds to the 5S rRNA independently of L5 and L18.

Its function is as follows. This is one of the proteins that binds to the 5S RNA in the ribosome where it forms part of the central protuberance. The sequence is that of Large ribosomal subunit protein bL25 from Nitrosomonas europaea (strain ATCC 19718 / CIP 103999 / KCTC 2705 / NBRC 14298).